The chain runs to 340 residues: Ribosomal RNA large subunit methyltransferase F (340 aa).

It belongs to the methyltransferase superfamily. METTL16/RlmF family.

Its subcellular location is the cytoplasm. The enzyme catalyses adenosine(1618) in 23S rRNA + S-adenosyl-L-methionine = N(6)-methyladenosine(1618) in 23S rRNA + S-adenosyl-L-homocysteine + H(+). Specifically methylates the adenine in position 1618 of 23S rRNA. The sequence is that of Ribosomal RNA large subunit methyltransferase F from Dechloromonas aromatica (strain RCB).